Consider the following 148-residue polypeptide: Snaclec stejaggregin-A subunit beta-2 (148 aa).

The first 23 residues, 1 to 23 (MGQFIFVSFGLLVVLLSLSGAGA), serve as a signal peptide directing secretion. Cys27 and Cys38 form a disulfide bridge. The 112-residue stretch at 34–145 (YDLYCYKVFK…CSRTHYVVCK (112 aa)) folds into the C-type lectin domain. 2 N-linked (GlcNAc...) asparagine glycosylation sites follow: Asn47 and Asn78. Cystine bridges form between Cys55/Cys144 and Cys121/Cys136.

It belongs to the snaclec family. Heteromultimer; disulfide-linked. In terms of tissue distribution, expressed by the venom gland.

It localises to the secreted. Its function is as follows. Interferes with one step of hemostasis (modulation of platelet aggregation, or coagulation cascade, for example). This Trimeresurus stejnegeri (Chinese green tree viper) protein is Snaclec stejaggregin-A subunit beta-2.